A 662-amino-acid polypeptide reads, in one-letter code: Sodium/glucose cotransporter 1 (662 aa).

The Extracellular portion of the chain corresponds to 1–24; sequence MDSSTWSPATTATTEPLKPHERIR. A helical membrane pass occupies residues 25-47; that stretch reads NAADISVIVIYFVVVMAVGLWAM. Topologically, residues 48–66 are cytoplasmic; the sequence is CSTNRGTVGGFFLAGRSMV. A helical membrane pass occupies residues 67-90; the sequence is WWPVGASLFASNIGSGHFVGLAGT. The Extracellular portion of the chain corresponds to 91-95; that stretch reads GAAAG. Residues 96-117 traverse the membrane as a helical segment; it reads IATGGFEWNALIWVVVLGWLFV. Residues 118 to 139 lie on the Cytoplasmic side of the membrane; that stretch reads PIYIKAGVVTMPEYLRKRFGGK. A helical membrane pass occupies residues 140–169; the sequence is RIQVYLSILSLMLYIFTKISADIFSGAIFI. Topologically, residues 170-176 are extracellular; sequence TLALGLD. Residues 177–193 traverse the membrane as a helical segment; sequence LYLAIFLLLAITGLYTI. Residues 194-202 are Cytoplasmic-facing; the sequence is TGGLAAVIY. A helical membrane pass occupies residues 203-221; sequence TDTLQTAIMLVGSFILTGF. The Extracellular portion of the chain corresponds to 222 to 275; it reads AFHEVGGYDAFMEKYMNAIPTVISDGNITIKKECYTPRADSFHIFRDPLKGDLP. N-linked (GlcNAc...) asparagine glycosylation occurs at asparagine 248. 5 cysteine pairs are disulfide-bonded: cysteine 255–cysteine 511, cysteine 255–cysteine 608, cysteine 345–cysteine 351, cysteine 355–cysteine 361, and cysteine 517–cysteine 522. Residues 276 to 295 form a helical membrane-spanning segment; the sequence is WPGLTFGLSILALWYWCTDQ. Topologically, residues 296 to 309 are cytoplasmic; sequence VIVQRCLSAKNMSH. The chain crosses the membrane as a helical span at residues 310 to 331; that stretch reads VKAGCVMCGYFKLLPMFVIVMP. The Extracellular portion of the chain corresponds to 332-375; the sequence is GMISRVLYTEKIACTVPSECEKYCGTKVGCSNIAYPTLVVELMP. Residues 376–406 traverse the membrane as a helical segment; that stretch reads NGLRGLMLSVMLASLMSSLTSIFNSASTLFT. The Cytoplasmic segment spans residues 407-422; the sequence is MDVYTKIRKRASEKEL. Residues 423–444 form a helical membrane-spanning segment; it reads MIAGRLFILVLIGISIAWVPIV. The Extracellular segment spans residues 445–451; it reads QSAQSGQ. The chain crosses the membrane as a helical span at residues 452–477; sequence LFDYIQSVTSYLGPPIAAVFLLAIFC. Over 478–481 the chain is Cytoplasmic; that stretch reads KRVN. The helical transmembrane segment at 482 to 504 threads the bilayer; the sequence is EEGAFWGLVIGCMIGLARMITEF. Residues 505–525 lie on the Extracellular side of the membrane; sequence AYGTGSCVEPSNCPTIICGVH. A helical membrane pass occupies residues 526 to 547; sequence YLYFAIILFVISIIIVLVVSLF. Over 548-642 the chain is Cytoplasmic; the sequence is TKPIPDVHLY…TSEKPLWRTV (95 aa). At threonine 587 the chain carries Phosphothreonine. A helical membrane pass occupies residues 643 to 660; it reads VNINGIILLTVAVFCHAY. Residues 661 to 662 lie on the Extracellular side of the membrane; it reads FA.

The protein belongs to the sodium:solute symporter (SSF) (TC 2.A.21) family. Post-translationally, N-glycosylation is not necessary for the cotransporter function.

The protein resides in the apical cell membrane. The enzyme catalyses D-glucose(out) + 2 Na(+)(out) = D-glucose(in) + 2 Na(+)(in). The catalysed reaction is D-galactose(out) + 2 Na(+)(out) = D-galactose(in) + 2 Na(+)(in). Enhanced by the interaction with PDZK1IP1/MAP17; but unlike SLC5A2/SGLT2, PDZK1IP1 is not essential for SLC5A1 transporter activity. Possibly modulated by cholesterol binding. Its function is as follows. Electrogenic Na(+)-coupled sugar symporter that actively transports D-glucose or D-galactose at the plasma membrane, with a Na(+) to sugar coupling ratio of 2:1. Transporter activity is driven by a transmembrane Na(+) electrochemical gradient set by the Na(+)/K(+) pump. Has a primary role in the transport of dietary monosaccharides from enterocytes to blood. Responsible for the absorption of D-glucose or D-galactose across the apical brush-border membrane of enterocytes, whereas basolateral exit is provided by GLUT2. Additionally, functions as a D-glucose sensor in enteroendocrine cells, triggering the secretion of the incretins GCG and GIP that control food intake and energy homeostasis. Together with SGLT2, functions in reabsorption of D-glucose from glomerular filtrate, playing a nonredundant role in the S3 segment of the proximal tubules. Transports D-glucose into endometrial epithelial cells, controlling glycogen synthesis and nutritional support for the embryo as well as the decidual transformation of endometrium prior to conception. Acts as a water channel enabling passive water transport in response to the osmotic gradient created upon sugar and Na(+) uptake. Has high water conductivity comparable to aquaporins and therefore is expected to play an important role in transepithelial water permeability, especially in the small intestine. In Sus scrofa (Pig), this protein is Sodium/glucose cotransporter 1 (SLC5A1).